Reading from the N-terminus, the 129-residue chain is Glycine cleavage system H protein (129 aa).

The Lipoyl-binding domain occupies 24 to 106 (SYTVGITEHA…YGDGWFFRIM (83 aa)). K65 is modified (N6-lipoyllysine).

This sequence belongs to the GcvH family. In terms of assembly, the glycine cleavage system is composed of four proteins: P, T, L and H. The cofactor is (R)-lipoate.

Functionally, the glycine cleavage system catalyzes the degradation of glycine. The H protein shuttles the methylamine group of glycine from the P protein to the T protein. The sequence is that of Glycine cleavage system H protein from Shewanella denitrificans (strain OS217 / ATCC BAA-1090 / DSM 15013).